The chain runs to 951 residues: Leucine-rich repeat-containing G-protein coupled receptor 4 (951 aa).

Positions 1-24 (MPGPLRLLCFFALGLLGSAGPSGA) are cleaved as a signal peptide. One can recognise an LRRNT domain in the interval 25–57 (APPLCAAPCSCDGDRRVDCSGKGLTAVPEGLSA). The Extracellular segment spans residues 25–544 (APPLCAAPCS…LLGSWMIRLT (520 aa)). Cystine bridges form between cysteine 29–cysteine 35 and cysteine 33–cysteine 43. LRR repeat units lie at residues 58–79 (FTQA…AFKN), 82–103 (FLEE…ALSG), 106–127 (ELKV…AIRG), 130–151 (ALQS…SFEG), 154–177 (QLRH…SNLP), 178–199 (TLQA…AFTN), 202–223 (SLVV…CFDG), 226–247 (NLET…IKAL), 249–270 (SLKE…AFAG), 273–294 (LLRT…AFHN), 320–341 (HLES…LCQN), 344–365 (MLRT…NGCR), 366–387 (ALEE…TFQG), 390–411 (SLRI…AFAK), and 414–435 (TITN…GLNG). The N-linked (GlcNAc...) asparagine glycan is linked to asparagine 68. Residues asparagine 188 and asparagine 199 are each glycosylated (N-linked (GlcNAc...) asparagine). N-linked (GlcNAc...) asparagine glycosylation is present at asparagine 294. Cysteines 339 and 364 form a disulfide. Disulfide bonds link cysteine 470–cysteine 522 and cysteine 471–cysteine 476. A disordered region spans residues 487–512 (NSPQDHSVTKEKGATDAANATSTAES). Positions 501–510 (TDAANATSTA) are enriched in low complexity. N-linked (GlcNAc...) asparagine glycosylation occurs at asparagine 505. A helical membrane pass occupies residues 545–565 (VWFIFLVALLFNLLVILTVFA). Over 566 to 575 (SCSSLPASKL) the chain is Cytoplasmic. The chain crosses the membrane as a helical span at residues 576–596 (FIGLISVSNLLMGIYTGILTF). Over 597-619 (LDAVSWGRFAEFGIWWETGSGCK) the chain is Extracellular. Cysteines 618 and 693 form a disulfide. Residues 620–640 (VAGSLAVFSSESAVFLLTLAA) form a helical membrane-spanning segment. Over 641 to 661 (VERSVFAKDVMKNGKSSHLRQ) the chain is Cytoplasmic. Residues 662 to 682 (FQVAALVALLGAAIAGCFPLF) traverse the membrane as a helical segment. At 683–703 (HGGQYSASPLCLPFPTGETPS) the chain is on the extracellular side. Residues 704–724 (LGFTVTLVLLNSLAFLLMAII) traverse the membrane as a helical segment. At 725–756 (YTKLYCNLEKEDPSENSQSSMIKHVAWLIFTN) the chain is on the cytoplasmic side. A helical transmembrane segment spans residues 757–777 (CIFFCPVAFFSFAPLITAISI). Topologically, residues 778 to 783 (SPEIMK) are extracellular. A helical transmembrane segment spans residues 784-804 (SVTLIFFPLPACLNPVLYVFF). Residues 805 to 951 (NPKFKDDWKL…YAYNLPRVRD (147 aa)) lie on the Cytoplasmic side of the membrane. Serine 920 is modified (phosphoserine).

Belongs to the G-protein coupled receptor 1 family.

Its subcellular location is the cell membrane. In terms of biological role, receptor for R-spondins that potentiates the canonical Wnt signaling pathway and is involved in the formation of various organs. Upon binding to R-spondins (RSPO1, RSPO2, RSPO3 or RSPO4), associates with phosphorylated LRP6 and frizzled receptors that are activated by extracellular Wnt receptors, triggering the canonical Wnt signaling pathway to increase expression of target genes. In contrast to classical G-protein coupled receptors, does not activate heterotrimeric G-proteins to transduce the signal. Its function as activator of the Wnt signaling pathway is required for the development of various organs, including liver, kidney, intestine, bone, reproductive tract and eye. May also act as a receptor for norrin (NDP), such results however require additional confirmation in vivo. Required during spermatogenesis to activate the Wnt signaling pathway in peritubular myoid cells. Required for the maintenance of intestinal stem cells and Paneth cell differentiation in postnatal intestinal crypts. Acts as a regulator of bone formation and remodeling. Involved in kidney development; required for maintaining the ureteric bud in an undifferentiated state. Involved in the development of the anterior segment of the eye. Required during erythropoiesis. Also acts as a negative regulator of innate immunity by inhibiting TLR2/TLR4 associated pattern-recognition and pro-inflammatory cytokine production. Plays an important role in regulating the circadian rhythms of plasma lipids, partially through regulating the rhythmic expression of MTTP. Required for proper development of GnRH neurons (gonadotropin-releasing hormone expressing neurons) that control the release of reproductive hormones from the pituitary gland. The sequence is that of Leucine-rich repeat-containing G-protein coupled receptor 4 (Lgr4) from Mus musculus (Mouse).